Here is a 254-residue protein sequence, read N- to C-terminus: Ribonuclease HII (254 aa).

The 185-residue stretch at 70-254 (QAIAGIDEVG…TFEPVKSMLG (185 aa)) folds into the RNase H type-2 domain. The a divalent metal cation site is built by Asp76, Glu77, and Asp168.

Belongs to the RNase HII family. Requires Mn(2+) as cofactor. It depends on Mg(2+) as a cofactor.

The protein localises to the cytoplasm. It catalyses the reaction Endonucleolytic cleavage to 5'-phosphomonoester.. Its function is as follows. Endonuclease that specifically degrades the RNA of RNA-DNA hybrids. This is Ribonuclease HII from Streptococcus gordonii (strain Challis / ATCC 35105 / BCRC 15272 / CH1 / DL1 / V288).